Reading from the N-terminus, the 178-residue chain is Protein RICE FLOWERING LOCUS T 1 (178 aa).

This sequence belongs to the phosphatidylethanolamine-binding protein family. Interacts with FTIP1. In terms of tissue distribution, expressed in leaf vascular tissues. Specifically expressed in the phloem including companion cells.

It localises to the cytoplasm. Its subcellular location is the nucleus. It is found in the endoplasmic reticulum. Its function is as follows. Probable mobile flower-promoting signal (florigen) that moves from the leaf to the shoot apical meristem (SAM) and induces flowering. Promotes the transition from vegetative growth to flowering under long day (LD) conditions. Acts upstream of MADS14 and MADS15. May also participate in the promotion of flowering under short day (SD) conditions. This Oryza sativa subsp. japonica (Rice) protein is Protein RICE FLOWERING LOCUS T 1.